The chain runs to 510 residues: Myosin-binding protein C, cardiac-type (510 aa).

3 consecutive Ig-like C2-type domains span residues 177 to 269, 270 to 347, and 378 to 438; these read KKST…VKEP, PYSS…TVKT, and RDQA…SFIP.

This sequence belongs to the immunoglobulin superfamily. MyBP family. As to expression, heart.

In terms of biological role, thick filament-associated protein located in the crossbridge region of vertebrate striated muscle a bands. In vitro it binds MHC, F-actin and native thin filaments, and modifies the activity of actin-activated myosin ATPase. It may modulate muscle contraction or may play a more structural role. The protein is Myosin-binding protein C, cardiac-type of Ambystoma mexicanum (Axolotl).